A 464-amino-acid polypeptide reads, in one-letter code: E3 ubiquitin-protein ligase TRAIP (464 aa).

Residues 7-50 form an RING-type; atypical zinc finger; sequence CTICSDFFDNARDVAAITCGHTFHQECLLQWFHSAPHRTCPQCR. Coiled-coil stretches lie at residues 142-186 and 236-277; these read LDKQ…MIRD and AQKA…LQKT. The interval 439 to 464 is disordered; sequence KRKKVSRPTACTSSLANQPRLEDFLK. The PIP-box signature appears at 456–464; the sequence is QPRLEDFLK.

The protein belongs to the TRAIP family.

Its subcellular location is the nucleus. It localises to the nucleoplasm. It is found in the nucleolus. The protein localises to the chromosome. The protein resides in the cytoplasm. The catalysed reaction is S-ubiquitinyl-[E2 ubiquitin-conjugating enzyme]-L-cysteine + [acceptor protein]-L-lysine = [E2 ubiquitin-conjugating enzyme]-L-cysteine + N(6)-ubiquitinyl-[acceptor protein]-L-lysine.. It functions in the pathway protein modification; protein ubiquitination. Its function is as follows. E3 ubiquitin ligase required to protect genome stability in response to replication stress. Acts as a key regulator of interstrand cross-link repair, which takes place when both strands of duplex DNA are covalently tethered together, thereby blocking replication and transcription. Controls the choice between the two pathways of replication-coupled interstrand-cross-link repair by mediating ubiquitination of mcm7 subunit of the CMG helicase complex. Short ubiquitin chains on mcm7 promote recruitment of DNA glycosylase neil3. If the interstrand cross-link cannot be cleaved by neil3, the ubiquitin chains continue to grow on mcm7, promoting the unloading of the CMG helicase complex by the vcp/p97 ATPase, enabling the Fanconi anemia DNA repair pathway. Only catalyzes ubiquitination of mcm7 when forks converge. Also involved in the repair of covalent DNA-protein cross-links (DPCs) during DNA synthesis: promotes ubiquitination of DPCs, leading to their degradation by the proteasome. Also acts as a negative regulator of innate immune signaling by inhibiting activation of NF-kappa-B mediated by TNF. The polypeptide is E3 ubiquitin-protein ligase TRAIP (Xenopus laevis (African clawed frog)).